Reading from the N-terminus, the 444-residue chain is Beta-D-glucosyl crocetin beta-1,6-glucosyltransferase (444 aa).

His9 acts as the Proton acceptor in catalysis. Residue His9 participates in an anthocyanidin binding. Residue Asp108 is the Charge relay of the active site. Residues Thr130, Ala319, Gln321, His336, Trp339, Asn340, Ser341, Glu344, Asp360, and Gln361 each coordinate UDP-alpha-D-glucose.

It belongs to the UDP-glycosyltransferase family. In terms of tissue distribution, ubiquitous.

The enzyme catalyses beta-D-glucosyl crocetin + UDP-alpha-D-glucose = beta-D-gentiobiosyl crocetin + UDP + H(+). It carries out the reaction bis(beta-D-glucosyl) crocetin + UDP-alpha-D-glucose = beta-D-gentiobiosyl beta-D-glucosyl crocetin + UDP + H(+). It catalyses the reaction beta-D-gentiobiosyl beta-D-glucosyl crocetin + UDP-alpha-D-glucose = bis(beta-D-gentiobiosyl) crocetin + UDP + H(+). In terms of biological role, glucosyltransferase catalyzing the beta 1-6 glucosylation of the sugar moiety of crocetin glucosyl esters to produce crocetin gentiobiosyl esters. Weak activity toward curcumin glucosides, but no activity with flavonoid glucosides, coumarin glucosides, 4-nitrophenyl glucoside or crocetin. Involved with UGT75L6 in sequential glycosylation of crocetin to crocin (bis(beta-D-gentiobiosyl) crocetin). The protein is Beta-D-glucosyl crocetin beta-1,6-glucosyltransferase (UGT94E5) of Gardenia jasminoides (Cape jasmine).